We begin with the raw amino-acid sequence, 182 residues long: Ribulose bisphosphate carboxylase small subunit, chloroplastic 3 (182 aa).

The transit peptide at 1–41 (MASIMMNKSVVLSKECAKPLASPKVTLNKRGFATTIATKNR) directs the protein to the chloroplast.

This sequence belongs to the RuBisCO small chain family. In terms of assembly, heterohexadecamer of 8 large and 8 small subunits.

It is found in the plastid. It localises to the chloroplast. Its function is as follows. RuBisCO catalyzes two reactions: the carboxylation of D-ribulose 1,5-bisphosphate, the primary event in carbon dioxide fixation, as well as the oxidative fragmentation of the pentose substrate. Both reactions occur simultaneously and in competition at the same active site. Although the small subunit is not catalytic it is essential for maximal activity. This chain is Ribulose bisphosphate carboxylase small subunit, chloroplastic 3, found in Acetabularia acetabulum (Mermaid's wine glass).